The sequence spans 438 residues: MDAHITPSTVNGTVRAPPSKSYTHRAILAAGYGDGATVKNPLFSADTRATARAVEAYGGTTEQADDDLEVTGFDGTPGTPKDVINCANSGTTMRLTTATGALVDGLAVLTGDESLRSRPQGPLLDALDQLGARAESTRENGQAPLVVGGDIDGGELAIRGDVSSQYITGLLMAGAVTESGIDIELTTALKSAPYVDITLEVLADFGVDAEVIGGDDSEVRSAGADGFRVDGGQSYAPTDGTYHVPGDFSSMSYLLAAGALAADEEVVVAGAHPSAQGDAAIVSILESMGADIEWNRDDGRITVRQSSLSGVEVGVADTPDLLPTIAVLGAAADGETRITDCEHVRLKETDRVAAMATELERLGVETDEYEDELVVYGGGIDGGTVAGHDDHRIVMSLAVAGLVADGEVTIKNADHVDVSFPSFFETLADLGVGVETGA.

3-phosphoshikimate is bound by residues Lys-20, Ser-21, and Arg-25. Position 20 (Lys-20) interacts with phosphoenolpyruvate. The phosphoenolpyruvate site is built by Gly-90 and Arg-118. The 3-phosphoshikimate site is built by Ser-163, Ser-164, Gln-165, Ser-191, Asp-320, and Lys-347. Gln-165 serves as a coordination point for phosphoenolpyruvate. Residue Asp-320 is the Proton acceptor of the active site. 2 residues coordinate phosphoenolpyruvate: Arg-351 and Arg-392.

The protein belongs to the EPSP synthase family. In terms of assembly, monomer.

The protein resides in the cytoplasm. It catalyses the reaction 3-phosphoshikimate + phosphoenolpyruvate = 5-O-(1-carboxyvinyl)-3-phosphoshikimate + phosphate. It participates in metabolic intermediate biosynthesis; chorismate biosynthesis. Catalyzes the transfer of the enolpyruvyl moiety of phosphoenolpyruvate (PEP) to the 5-hydroxyl of shikimate-3-phosphate (S3P) to produce enolpyruvyl shikimate-3-phosphate and inorganic phosphate. The polypeptide is 3-phosphoshikimate 1-carboxyvinyltransferase (Natronomonas pharaonis (strain ATCC 35678 / DSM 2160 / CIP 103997 / JCM 8858 / NBRC 14720 / NCIMB 2260 / Gabara) (Halobacterium pharaonis)).